The following is a 298-amino-acid chain: GTP cyclohydrolase FolE2 (298 aa).

This sequence belongs to the GTP cyclohydrolase IV family.

The enzyme catalyses GTP + H2O = 7,8-dihydroneopterin 3'-triphosphate + formate + H(+). It functions in the pathway cofactor biosynthesis; 7,8-dihydroneopterin triphosphate biosynthesis; 7,8-dihydroneopterin triphosphate from GTP: step 1/1. Converts GTP to 7,8-dihydroneopterin triphosphate. The chain is GTP cyclohydrolase FolE2 from Xylella fastidiosa (strain 9a5c).